The chain runs to 269 residues: MSHRQPNRRERGVTRLLPETWRGLTLLLAGVLLLYYLLPIGALVFAQSPASLATDVTNEVVLTAATNSVVAATLSTLVAVAFGVPLAYWLSRTSFRGRDVILALVMLPLVLPPVVSGMLLLRLVGPAGLGQLTSVPLTRSLFGVVLAQTYVASPFLVVTAKTAFDGVDRQLEAAARSLGEDRVGSVRRVTLPLAKQGILAGVTLTFARAIGEFGATLMLAYYPRTLPVQIWVSYLSTGLDAAFPVALVLVGIAVGAILLVHALGTNPWE.

6 helical membrane-spanning segments follow: residues 26-46 (LLLA…LVFA), 69-89 (VVAA…LAYW), 100-120 (VILA…GMLL), 140-160 (SLFG…VVTA), 198-218 (ILAG…ATLM), and 243-263 (FPVA…VHAL). One can recognise an ABC transmembrane type-1 domain in the interval 65–258 (ATNSVVAATL…LVGIAVGAIL (194 aa)).

This sequence belongs to the binding-protein-dependent transport system permease family. As to quaternary structure, the complex is composed of two ATP-binding proteins, two transmembrane proteins (HVO_B0370) and a solute-binding protein (HVO_B0369).

It is found in the cell membrane. Part of an ABC transporter complex involved in molybdenum import. Responsible for the translocation of the substrate across the membrane. This Haloferax volcanii (strain ATCC 29605 / DSM 3757 / JCM 8879 / NBRC 14742 / NCIMB 2012 / VKM B-1768 / DS2) (Halobacterium volcanii) protein is Probable molybdenum ABC transporter permease protein HVO_B0370.